We begin with the raw amino-acid sequence, 307 residues long: Type 2A encapsulin shell protein (307 aa).

Belongs to the encapsulin family. Family 2A subfamily. As to quaternary structure, homooligomeric. The encapsulin nanocompartment is formed by 60 subunits; monomers form pentamers which assemble to form shells. There are 12 charged pores where the pentamers meet as well as 3-fold axis channels and dimer channels. Post-translationally, the N-terminus is blocked.

Its subcellular location is the encapsulin nanocompartment. The protein localises to the cytoplasm. It localises to the cytosol. It is found in the cell membrane. In terms of biological role, shell component of a type 2A encapsulin nanocompartment. Forms encapsulin nanocompartments about 24 nm in diameter from 60 monomers. Probably encapsulates at least cysteine desulfurase (CyD, AC O32975) and allows passage of cysteine into its interior, probably involved in sulfur metabolism. Expression in M.smegmatis generates a multimeric protein, whereas expression in E.coli does not. The chain is Type 2A encapsulin shell protein from Mycobacterium leprae (strain TN).